Here is a 239-residue protein sequence, read N- to C-terminus: tRNA1(Val) (adenine(37)-N6)-methyltransferase (239 aa).

Belongs to the methyltransferase superfamily. tRNA (adenine-N(6)-)-methyltransferase family.

The protein localises to the cytoplasm. The enzyme catalyses adenosine(37) in tRNA1(Val) + S-adenosyl-L-methionine = N(6)-methyladenosine(37) in tRNA1(Val) + S-adenosyl-L-homocysteine + H(+). In terms of biological role, specifically methylates the adenine in position 37 of tRNA(1)(Val) (anticodon cmo5UAC). The polypeptide is tRNA1(Val) (adenine(37)-N6)-methyltransferase (Vibrio parahaemolyticus serotype O3:K6 (strain RIMD 2210633)).